A 210-amino-acid chain; its full sequence is MAKLRVAYEYTEAEDKSIRLGLFLIISGVVSLFIFGFCWLSPALQDLQATEANCTVLSVQQIGEVFECTFTCGADCRGTSQYPCVQVYVNNSESNSRALLHSDEHQLLTNPKCSYIPPCKRENQKNLESVMNWQQYWKDEIGSQPFTCYFNQHQRPDDVLLHRTHDEIVLLHCFLWPLVTFVVGVLIVVLTICAKSLAVKAEAMKKRKFS.

The Cytoplasmic portion of the chain corresponds to 1–19 (MAKLRVAYEYTEAEDKSIR). The chain crosses the membrane as a helical span at residues 20–40 (LGLFLIISGVVSLFIFGFCWL). Residues 41 to 167 (SPALQDLQAT…DVLLHRTHDE (127 aa)) lie on the Extracellular side of the membrane. 2 N-linked (GlcNAc...) asparagine glycosylation sites follow: N53 and N90. Residues 168 to 188 (IVLLHCFLWPLVTFVVGVLIV) form a helical membrane-spanning segment. At 189-210 (VLTICAKSLAVKAEAMKKRKFS) the chain is on the cytoplasmic side.

It belongs to the KCNMB (TC 8.A.14.1) family. KCNMB4 subfamily. In terms of assembly, interacts with KCNMA1 tetramer. There are probably 4 molecules of KCMNB4 per KCNMA1 tetramer. Interacts with FMR1 (via N-terminus). Phosphorylated. Phosphorylation modulates its effect on KCNMA1 activation kinetics. Post-translationally, N-glycosylated. A highly glycosylated form is promoted by KCNMA1. Glycosylation, which is not required for the interaction with KCNMA1 and subcellular location, increases protection against charybdotoxin. As to expression, predominantly expressed in brain. In brain, it is expressed in the cerebellum, cerebral cortex, medulla, spinal cord, occipital pole, frontal lobe, temporal lobe, putamen, amygdala, caudate nucleus, corpus callosum, hippocampus, substantia nigra and thalamus. Weakly or not expressed in other tissues.

It is found in the membrane. Regulatory subunit of the calcium activated potassium KCNMA1 (maxiK) channel. Modulates the calcium sensitivity and gating kinetics of KCNMA1, thereby contributing to KCNMA1 channel diversity. Decreases the gating kinetics and calcium sensitivity of the KCNMA1 channel, but with fast deactivation kinetics. May decrease KCNMA1 channel openings at low calcium concentrations but increases channel openings at high calcium concentrations. Makes KCNMA1 channel resistant to 100 nM charybdotoxin (CTX) toxin concentrations. The chain is Calcium-activated potassium channel subunit beta-4 (KCNMB4) from Homo sapiens (Human).